The following is a 541-amino-acid chain: Chaperonin GroEL (541 aa).

Residues 29 to 32 (TLGP), 86 to 90 (DGTTT), glycine 413, 477 to 479 (DAL), and aspartate 493 contribute to the ATP site.

The protein belongs to the chaperonin (HSP60) family. In terms of assembly, forms a cylinder of 14 subunits composed of two heptameric rings stacked back-to-back. Interacts with the co-chaperonin GroES.

Its subcellular location is the cytoplasm. It carries out the reaction ATP + H2O + a folded polypeptide = ADP + phosphate + an unfolded polypeptide.. Its function is as follows. Together with its co-chaperonin GroES, plays an essential role in assisting protein folding. The GroEL-GroES system forms a nano-cage that allows encapsulation of the non-native substrate proteins and provides a physical environment optimized to promote and accelerate protein folding. The sequence is that of Chaperonin GroEL from Clostridium botulinum (strain 657 / Type Ba4).